The chain runs to 396 residues: Putative nickel insertion protein (396 aa).

This sequence belongs to the LarC family.

The chain is Putative nickel insertion protein from Methanococcoides burtonii (strain DSM 6242 / NBRC 107633 / OCM 468 / ACE-M).